The sequence spans 274 residues: Non-homologous end joining protein Ku (274 aa).

The Ku domain maps to 11 to 195 (ITFGLVNVPV…KYKITPKELS (185 aa)).

This sequence belongs to the prokaryotic Ku family. In terms of assembly, homodimer. Interacts with LigD.

With LigD forms a non-homologous end joining (NHEJ) DNA repair enzyme, which repairs dsDNA breaks with reduced fidelity. Binds linear dsDNA with 5'- and 3'- overhangs but not closed circular dsDNA nor ssDNA. Recruits and stimulates the ligase activity of LigD. In Coxiella burnetii (strain RSA 331 / Henzerling II), this protein is Non-homologous end joining protein Ku.